The primary structure comprises 142 residues: Small ribosomal subunit protein uS9 (142 aa).

A disordered region spans residues 117–142 (KGDPRRTEHKKPGIKHARSKRQKAYR). Residues 123-142 (TEHKKPGIKHARSKRQKAYR) are compositionally biased toward basic residues.

This sequence belongs to the universal ribosomal protein uS9 family.

This chain is Small ribosomal subunit protein uS9, found in Pyrobaculum aerophilum (strain ATCC 51768 / DSM 7523 / JCM 9630 / CIP 104966 / NBRC 100827 / IM2).